The following is a 619-amino-acid chain: Zinc finger protein 668 (619 aa).

Met-1 carries the post-translational modification N-acetylmethionine. Phosphoserine is present on Ser-10. The C2H2-type 1 zinc-finger motif lies at 22-44; the sequence is YKCLFCTKTFPNAPRAARHAATH. The disordered stretch occupies residues 36-74; sequence RAARHAATHTPTDCTEEVREAQPKVDTEPKAEEASGDKV. Over residues 51–71 the composition is skewed to basic and acidic residues; it reads EEVREAQPKVDTEPKAEEASG. Residues Lys-59, Lys-65, and Lys-80 each participate in a glycyl lysine isopeptide (Lys-Gly) (interchain with G-Cter in SUMO2) cross-link. 11 consecutive C2H2-type zinc fingers follow at residues 84-106, 112-134, 140-162, 168-190, 196-218, 224-246, 252-274, 280-302, 308-330, 336-358, and 364-386; these read YACP…GRSH, FPCP…LASH, FRCT…QRGH, YACP…RRTH, YSCE…ERSH, FLCS…QRIH, YRCP…ERTH, FLCP…QRAH, YRCE…RRVH, FKCL…ALVH, and FRCE…SRMH. A Glycyl lysine isopeptide (Lys-Gly) (interchain with G-Cter in SUMO2) cross-link involves residue Lys-154. Ser-387 is subject to Phosphoserine. The C2H2-type 13 zinc finger occupies 392–414; it reads FHCNACGKSFVVLSSLRKHERTH. A disordered region spans residues 491–513; that stretch reads VGEAPSTLGDAGEVGGEETDEKP. Lys-512 participates in a covalent cross-link: Glycyl lysine isopeptide (Lys-Gly) (interchain with G-Cter in SUMO2). 3 consecutive C2H2-type zinc fingers follow at residues 516–538, 544–566, and 572–594; these read FVCR…ERSH, FPCT…SRTH, and YSCS…ERTH.

Belongs to the krueppel C2H2-type zinc-finger protein family.

It is found in the nucleus. In terms of biological role, may be involved in transcriptional regulation. May play a role in DNA repair process. The protein is Zinc finger protein 668 (Znf668) of Mus musculus (Mouse).